The primary structure comprises 741 residues: D-(-)-3-hydroxybutyrate oligomer hydrolase (741 aa).

A signal peptide spans 1 to 23; sequence MKTIQGKSPGRWYSRGMLLAAMA. The segment at 45 to 68 is disordered; it reads NGNAGGNGNNNGNNNGNTVSNTKP. The Charge relay system role is filled by Ser338.

The protein belongs to the D-(-)-3-hydroxybutyrate oligomer hydrolase family.

It is found in the secreted. The enzyme catalyses (3R)-hydroxybutanoate dimer + H2O = 2 (R)-3-hydroxybutanoate + H(+). It participates in lipid metabolism; butanoate metabolism. Its function is as follows. Participates in the degradation of poly-3-hydroxybutyrate (PHB). It works downstream of poly(3-hydroxybutyrate) depolymerase, hydrolyzing D(-)-3-hydroxybutyrate oligomers of various length (3HB-oligomers) into 3HB-monomers. The polypeptide is D-(-)-3-hydroxybutyrate oligomer hydrolase (Ralstonia pickettii (Burkholderia pickettii)).